Consider the following 337-residue polypeptide: Phenylalanine--tRNA ligase alpha subunit (337 aa).

Residue glutamate 252 participates in Mg(2+) binding.

Belongs to the class-II aminoacyl-tRNA synthetase family. Phe-tRNA synthetase alpha subunit type 1 subfamily. As to quaternary structure, tetramer of two alpha and two beta subunits. It depends on Mg(2+) as a cofactor.

The protein resides in the cytoplasm. It carries out the reaction tRNA(Phe) + L-phenylalanine + ATP = L-phenylalanyl-tRNA(Phe) + AMP + diphosphate + H(+). The protein is Phenylalanine--tRNA ligase alpha subunit of Francisella tularensis subsp. holarctica (strain OSU18).